A 247-amino-acid polypeptide reads, in one-letter code: Adenosylcobinamide-GDP ribazoletransferase (247 aa).

Helical transmembrane passes span 34–54, 59–79, 113–133, and 194–214; these read IITF…VFMV, CGVP…TGGF, GGLA…ELAL, and VLLP…AIFI.

The protein belongs to the CobS family. The cofactor is Mg(2+).

It is found in the cell inner membrane. The catalysed reaction is alpha-ribazole + adenosylcob(III)inamide-GDP = adenosylcob(III)alamin + GMP + H(+). It carries out the reaction alpha-ribazole 5'-phosphate + adenosylcob(III)inamide-GDP = adenosylcob(III)alamin 5'-phosphate + GMP + H(+). Its pathway is cofactor biosynthesis; adenosylcobalamin biosynthesis; adenosylcobalamin from cob(II)yrinate a,c-diamide: step 7/7. Functionally, joins adenosylcobinamide-GDP and alpha-ribazole to generate adenosylcobalamin (Ado-cobalamin). Also synthesizes adenosylcobalamin 5'-phosphate from adenosylcobinamide-GDP and alpha-ribazole 5'-phosphate. The polypeptide is Adenosylcobinamide-GDP ribazoletransferase (Escherichia coli (strain ATCC 8739 / DSM 1576 / NBRC 3972 / NCIMB 8545 / WDCM 00012 / Crooks)).